Here is a 412-residue protein sequence, read N- to C-terminus: Poly-beta-1,6-N-acetyl-D-glucosamine synthase (412 aa).

A run of 4 helical transmembrane segments spans residues 6 to 28, 290 to 312, 332 to 354, and 366 to 388; these read FLLF…FYFT, LYIL…LYLG, IFLL…ALFI, and LIFV…LVAF.

This sequence belongs to the glycosyltransferase 2 family.

It localises to the cell membrane. Its function is as follows. N-acetylglucosaminyltransferase that catalyzes the polymerization of single monomer units of UDP-N-acetylglucosamine to produce the linear homomer poly-beta-1,6-N-acetyl-D-glucosamine (PNAG, also referred to as PIA), a biofilm adhesin polysaccharide. Requires IcaD for full activity. This Staphylococcus aureus (strain MSSA476) protein is Poly-beta-1,6-N-acetyl-D-glucosamine synthase (icaA).